Reading from the N-terminus, the 1370-residue chain is DNA-directed RNA polymerase subunit beta (1370 aa).

Belongs to the RNA polymerase beta chain family. The RNAP catalytic core consists of 2 alpha, 1 beta, 1 beta' and 1 omega subunit. When a sigma factor is associated with the core the holoenzyme is formed, which can initiate transcription.

It carries out the reaction RNA(n) + a ribonucleoside 5'-triphosphate = RNA(n+1) + diphosphate. Its function is as follows. DNA-dependent RNA polymerase catalyzes the transcription of DNA into RNA using the four ribonucleoside triphosphates as substrates. The chain is DNA-directed RNA polymerase subunit beta from Delftia acidovorans (strain DSM 14801 / SPH-1).